The following is a 649-amino-acid chain: DNA mismatch repair protein MutL (649 aa).

It belongs to the DNA mismatch repair MutL/HexB family.

In terms of biological role, this protein is involved in the repair of mismatches in DNA. It is required for dam-dependent methyl-directed DNA mismatch repair. May act as a 'molecular matchmaker', a protein that promotes the formation of a stable complex between two or more DNA-binding proteins in an ATP-dependent manner without itself being part of a final effector complex. The protein is DNA mismatch repair protein MutL of Streptococcus pneumoniae serotype 2 (strain D39 / NCTC 7466).